The sequence spans 502 residues: Pentatricopeptide repeat-containing protein At4g01990, mitochondrial (502 aa).

The transit peptide at 1–13 (MMHSVSRLARRFC) directs the protein to the mitochondrion. 7 PPR repeats span residues 139–173 (NQSTYGSLLNCYCVEKEEVKAKAHFENMVDLNHVS), 174–208 (NSLPFNNLMAMYMGLGQPEKVPALVVAMKEKSITP), 209–243 (CDITYSMWIQSCGSLKDLDGVEKVLDEMKAEGEGI), 245–275 (SWNTFANLAAIYIKVGLYGKAEEALKSLENN), 280–310 (VRDCYHFLINLYTGIANASEVYRVWDLLKKR), 315–345 (NNSSYLTMLRALSKLDDIDGVKKVFAEWEST), and 350–381 (DMRMANVAISSYLKQNMYEEAEAVFNGAMKKC).

It belongs to the PPR family. P subfamily.

It is found in the mitochondrion. The chain is Pentatricopeptide repeat-containing protein At4g01990, mitochondrial from Arabidopsis thaliana (Mouse-ear cress).